The chain runs to 426 residues: Serine--tRNA ligase (426 aa).

Position 232–234 (232–234 (TAE)) interacts with L-serine. 263-265 (RRE) serves as a coordination point for ATP. L-serine is bound at residue E286. 350–353 (EISS) lines the ATP pocket. S385 provides a ligand contact to L-serine.

It belongs to the class-II aminoacyl-tRNA synthetase family. Type-1 seryl-tRNA synthetase subfamily. In terms of assembly, homodimer. The tRNA molecule binds across the dimer.

Its subcellular location is the cytoplasm. The enzyme catalyses tRNA(Ser) + L-serine + ATP = L-seryl-tRNA(Ser) + AMP + diphosphate + H(+). It catalyses the reaction tRNA(Sec) + L-serine + ATP = L-seryl-tRNA(Sec) + AMP + diphosphate + H(+). The protein operates within aminoacyl-tRNA biosynthesis; selenocysteinyl-tRNA(Sec) biosynthesis; L-seryl-tRNA(Sec) from L-serine and tRNA(Sec): step 1/1. Functionally, catalyzes the attachment of serine to tRNA(Ser). Is also able to aminoacylate tRNA(Sec) with serine, to form the misacylated tRNA L-seryl-tRNA(Sec), which will be further converted into selenocysteinyl-tRNA(Sec). The polypeptide is Serine--tRNA ligase (Fervidobacterium nodosum (strain ATCC 35602 / DSM 5306 / Rt17-B1)).